The primary structure comprises 508 residues: Hydroxymethylglutaryl-CoA synthase, mitochondrial (508 aa).

The transit peptide at 1 to 37 (MQRLLTPVRQVLRVKRAMQEASFMPPLLPPAAHQRFS) directs the protein to the mitochondrion. K52 carries the post-translational modification N6-succinyllysine. The (3S)-3-hydroxy-3-methylglutaryl-CoA site is built by E80 and A81. Residue E132 is the Proton donor/acceptor of the active site. 3 residues coordinate (3S)-3-hydroxy-3-methylglutaryl-CoA: C166, N204, and T208. C166 acts as the Acyl-thioester intermediate in catalysis. K243 bears the N6-acetyllysine mark. K256 carries the N6-acetyllysine; alternate modification. Residue K256 is modified to N6-succinyllysine; alternate. (3S)-3-hydroxy-3-methylglutaryl-CoA is bound by residues S258 and H301. H301 serves as the catalytic Proton donor/acceptor. K306 carries the post-translational modification N6-acetyllysine. Residue K310 coordinates (3S)-3-hydroxy-3-methylglutaryl-CoA. At K310 the chain carries N6-acetyllysine; alternate. K310 carries the post-translational modification N6-succinyllysine; alternate. K333 is subject to N6-succinyllysine. N6-acetyllysine; alternate occurs at positions 342, 350, 354, and 358. N6-succinyllysine; alternate is present on residues K342, K350, K354, and K358. (3S)-3-hydroxy-3-methylglutaryl-CoA contacts are provided by N380 and S414. S433 is modified (phosphoserine). Residue K437 is modified to N6-acetyllysine. A phosphoserine mark is found at S440 and S456. K473 is modified (N6-acetyllysine; alternate). N6-succinyllysine; alternate is present on K473.

This sequence belongs to the thiolase-like superfamily. HMG-CoA synthase family. Homodimer. In terms of processing, succinylated. Desuccinylated by SIRT5. Succinylation, at least at Lys-310, inhibits the enzymatic activity.

It localises to the mitochondrion. The enzyme catalyses acetoacetyl-CoA + acetyl-CoA + H2O = (3S)-3-hydroxy-3-methylglutaryl-CoA + CoA + H(+). Its pathway is metabolic intermediate biosynthesis; (R)-mevalonate biosynthesis; (R)-mevalonate from acetyl-CoA: step 2/3. Its function is as follows. Catalyzes the first irreversible step in ketogenesis, condensing acetyl-CoA to acetoacetyl-CoA to form HMG-CoA, which is converted by HMG-CoA reductase (HMGCR) into mevalonate. This Sus scrofa (Pig) protein is Hydroxymethylglutaryl-CoA synthase, mitochondrial (HMGCS2).